A 323-amino-acid chain; its full sequence is Zinc finger C2HC domain-containing protein 1A (323 aa).

The C2HC/C3H-type 1 zinc finger occupies 7–36 (ELRPCKICGRTFFPATLKKHVPICQKTSVK). 4 residues coordinate Zn(2+): cysteine 11, cysteine 14, histidine 26, and cysteine 30. Positions 35–75 (VKKRKTFESSRQRAEGTDINTVKPVKPRPEPPKKQSNWKRK) are disordered. Basic and acidic residues predominate over residues 40–50 (TFESSRQRAEG). The segment at 110 to 139 (DYVQCPYCQRRFNQNAADRHINFCKEQSAR) adopts a C2HC/C3H-type 2 zinc-finger fold. Cysteine 114, cysteine 117, histidine 129, and cysteine 133 together coordinate Zn(2+). The segment at 138-273 (ARMGQKIKGG…EAAMGYDSSD (136 aa)) is disordered. A compositionally biased stretch (polar residues) spans 208–226 (KYQTQSPAHKNSTMVTSPQ).

Belongs to the ZC2HC1 family. Requires Zn(2+) as cofactor.

The sequence is that of Zinc finger C2HC domain-containing protein 1A (zc2hc1a) from Xenopus laevis (African clawed frog).